The chain runs to 218 residues: UPF0329 protein ECU10_1860 (218 aa).

This sequence belongs to the UPF0329 family.

This chain is UPF0329 protein ECU10_1860, found in Encephalitozoon cuniculi (strain GB-M1) (Microsporidian parasite).